Reading from the N-terminus, the 238-residue chain is Cell division protein A (238 aa).

In terms of assembly, interacts with CdvB.

The protein localises to the cytoplasm. Its subcellular location is the nucleoid. It localises to the cell membrane. Its function is as follows. Part of a cell division machinery. The CdvA, CdvB and CdvC proteins polymerize between segregating nucleoids and persist throughout cell division, forming a successively smaller structure during constriction. CdvA is a membrane interacting protein that recruits ESCRT-III homologs to the membrane. The chain is Cell division protein A from Sulfolobus acidocaldarius (strain ATCC 33909 / DSM 639 / JCM 8929 / NBRC 15157 / NCIMB 11770).